The chain runs to 635 residues: 1-deoxy-D-xylulose-5-phosphate synthase (635 aa).

Residues H78 and 119-121 contribute to the thiamine diphosphate site; that span reads GHS. Position 151 (D151) interacts with Mg(2+). Thiamine diphosphate contacts are provided by residues 152–153, N180, Y289, and E371; that span reads GA. A Mg(2+)-binding site is contributed by N180.

Belongs to the transketolase family. DXPS subfamily. As to quaternary structure, homodimer. The cofactor is Mg(2+). It depends on thiamine diphosphate as a cofactor.

It catalyses the reaction D-glyceraldehyde 3-phosphate + pyruvate + H(+) = 1-deoxy-D-xylulose 5-phosphate + CO2. It functions in the pathway metabolic intermediate biosynthesis; 1-deoxy-D-xylulose 5-phosphate biosynthesis; 1-deoxy-D-xylulose 5-phosphate from D-glyceraldehyde 3-phosphate and pyruvate: step 1/1. Catalyzes the acyloin condensation reaction between C atoms 2 and 3 of pyruvate and glyceraldehyde 3-phosphate to yield 1-deoxy-D-xylulose-5-phosphate (DXP). This is 1-deoxy-D-xylulose-5-phosphate synthase from Bartonella tribocorum (strain CIP 105476 / IBS 506).